The sequence spans 673 residues: DNA ligase (673 aa).

NAD(+) contacts are provided by residues 32–36 (DAEYD), 81–82 (SL), and Glu-113. Lys-115 functions as the N6-AMP-lysine intermediate in the catalytic mechanism. Arg-136, Glu-173, Lys-290, and Lys-314 together coordinate NAD(+). Positions 408, 411, 426, and 432 each coordinate Zn(2+). Residues 595–673 (EIDSPFAGKT…EAEMIRLLGA (79 aa)) enclose the BRCT domain.

This sequence belongs to the NAD-dependent DNA ligase family. LigA subfamily. It depends on Mg(2+) as a cofactor. Requires Mn(2+) as cofactor.

The catalysed reaction is NAD(+) + (deoxyribonucleotide)n-3'-hydroxyl + 5'-phospho-(deoxyribonucleotide)m = (deoxyribonucleotide)n+m + AMP + beta-nicotinamide D-nucleotide.. DNA ligase that catalyzes the formation of phosphodiester linkages between 5'-phosphoryl and 3'-hydroxyl groups in double-stranded DNA using NAD as a coenzyme and as the energy source for the reaction. It is essential for DNA replication and repair of damaged DNA. In Serratia proteamaculans (strain 568), this protein is DNA ligase.